Here is a 311-residue protein sequence, read N- to C-terminus: Serine/threonine-protein phosphatase PP1-1 (311 aa).

Mn(2+) is bound by residues D53, H55, D82, and N114. Residue H115 is the Proton donor of the active site. The Mn(2+) site is built by H164 and H238.

It belongs to the PPP phosphatase family. PP-6 (PP-V) subfamily. In terms of assembly, inactivated in a complex with phosphatase methylesterase PPE1 (PP2Ai). Interacts with phosphatase 2A activator RRD1, which can reactivate PP2Ai by dissociating the catalytic subunit from the complex. Forms a ternary complex with RRD1-TAP42. Mn(2+) is required as a cofactor.

The protein localises to the cytoplasm. The enzyme catalyses O-phospho-L-seryl-[protein] + H2O = L-seryl-[protein] + phosphate. It catalyses the reaction O-phospho-L-threonyl-[protein] + H2O = L-threonyl-[protein] + phosphate. Involved in the dephosphorylation of the large subunit of RNA polymerase II. Is required in late G1 for normal G1 cyclin expression, bud initiation and expression of certain genes that are periodically expressed during late G1. Associates with the SAP proteins in a cell cycle-dependent manner. The polypeptide is Serine/threonine-protein phosphatase PP1-1 (SIT4) (Saccharomyces cerevisiae (strain ATCC 204508 / S288c) (Baker's yeast)).